The primary structure comprises 192 residues: Molybdenum cofactor guanylyltransferase (192 aa).

GTP contacts are provided by K21, D67, and D101. D101 serves as a coordination point for Mg(2+).

Belongs to the MobA family. Monomer. Mg(2+) is required as a cofactor.

Its subcellular location is the cytoplasm. It carries out the reaction Mo-molybdopterin + GTP + H(+) = Mo-molybdopterin guanine dinucleotide + diphosphate. Its function is as follows. Transfers a GMP moiety from GTP to Mo-molybdopterin (Mo-MPT) cofactor (Moco or molybdenum cofactor) to form Mo-molybdopterin guanine dinucleotide (Mo-MGD) cofactor. This Neisseria meningitidis serogroup C / serotype 2a (strain ATCC 700532 / DSM 15464 / FAM18) protein is Molybdenum cofactor guanylyltransferase.